Reading from the N-terminus, the 305-residue chain is UDP-3-O-acyl-N-acetylglucosamine deacetylase (305 aa).

3 residues coordinate Zn(2+): His-78, His-237, and Asp-241. His-264 serves as the catalytic Proton donor.

It belongs to the LpxC family. Requires Zn(2+) as cofactor.

The catalysed reaction is a UDP-3-O-[(3R)-3-hydroxyacyl]-N-acetyl-alpha-D-glucosamine + H2O = a UDP-3-O-[(3R)-3-hydroxyacyl]-alpha-D-glucosamine + acetate. It participates in glycolipid biosynthesis; lipid IV(A) biosynthesis; lipid IV(A) from (3R)-3-hydroxytetradecanoyl-[acyl-carrier-protein] and UDP-N-acetyl-alpha-D-glucosamine: step 2/6. Its function is as follows. Catalyzes the hydrolysis of UDP-3-O-myristoyl-N-acetylglucosamine to form UDP-3-O-myristoylglucosamine and acetate, the committed step in lipid A biosynthesis. In Burkholderia cenocepacia (strain HI2424), this protein is UDP-3-O-acyl-N-acetylglucosamine deacetylase.